Reading from the N-terminus, the 125-residue chain is Holo-[acyl-carrier-protein] synthase (125 aa).

Residues D8 and E57 each contribute to the Mg(2+) site.

The protein belongs to the P-Pant transferase superfamily. AcpS family. The cofactor is Mg(2+).

Its subcellular location is the cytoplasm. The enzyme catalyses apo-[ACP] + CoA = holo-[ACP] + adenosine 3',5'-bisphosphate + H(+). Functionally, transfers the 4'-phosphopantetheine moiety from coenzyme A to a Ser of acyl-carrier-protein. The protein is Holo-[acyl-carrier-protein] synthase of Nitrosomonas europaea (strain ATCC 19718 / CIP 103999 / KCTC 2705 / NBRC 14298).